Consider the following 307-residue polypeptide: Transaldolase (307 aa).

Residue lysine 125 is the Schiff-base intermediate with substrate of the active site.

Belongs to the transaldolase family. Type 1 subfamily.

The protein resides in the cytoplasm. The enzyme catalyses D-sedoheptulose 7-phosphate + D-glyceraldehyde 3-phosphate = D-erythrose 4-phosphate + beta-D-fructose 6-phosphate. The protein operates within carbohydrate degradation; pentose phosphate pathway; D-glyceraldehyde 3-phosphate and beta-D-fructose 6-phosphate from D-ribose 5-phosphate and D-xylulose 5-phosphate (non-oxidative stage): step 2/3. Transaldolase is important for the balance of metabolites in the pentose-phosphate pathway. The protein is Transaldolase of Pseudomonas aeruginosa (strain ATCC 15692 / DSM 22644 / CIP 104116 / JCM 14847 / LMG 12228 / 1C / PRS 101 / PAO1).